Reading from the N-terminus, the 427-residue chain is 3-phosphoshikimate 1-carboxyvinyltransferase (427 aa).

3-phosphoshikimate contacts are provided by lysine 22, serine 23, and arginine 27. Position 22 (lysine 22) interacts with phosphoenolpyruvate. 2 residues coordinate phosphoenolpyruvate: glycine 93 and arginine 122. Serine 167, glutamine 169, aspartate 315, and lysine 342 together coordinate 3-phosphoshikimate. A phosphoenolpyruvate-binding site is contributed by glutamine 169. The active-site Proton acceptor is the aspartate 315. Residues arginine 346 and arginine 387 each contribute to the phosphoenolpyruvate site.

The protein belongs to the EPSP synthase family. Monomer.

The protein resides in the cytoplasm. The enzyme catalyses 3-phosphoshikimate + phosphoenolpyruvate = 5-O-(1-carboxyvinyl)-3-phosphoshikimate + phosphate. It functions in the pathway metabolic intermediate biosynthesis; chorismate biosynthesis; chorismate from D-erythrose 4-phosphate and phosphoenolpyruvate: step 6/7. Its function is as follows. Catalyzes the transfer of the enolpyruvyl moiety of phosphoenolpyruvate (PEP) to the 5-hydroxyl of shikimate-3-phosphate (S3P) to produce enolpyruvyl shikimate-3-phosphate and inorganic phosphate. In Thermus thermophilus (strain ATCC BAA-163 / DSM 7039 / HB27), this protein is 3-phosphoshikimate 1-carboxyvinyltransferase.